Consider the following 317-residue polypeptide: tRNA dimethylallyltransferase (317 aa).

19–26 (GPTASGKS) is a binding site for ATP. Substrate is bound at residue 21-26 (TASGKS). Residues 49 to 52 (DSAQ) form an interaction with substrate tRNA region.

Belongs to the IPP transferase family. As to quaternary structure, monomer. Requires Mg(2+) as cofactor.

The catalysed reaction is adenosine(37) in tRNA + dimethylallyl diphosphate = N(6)-dimethylallyladenosine(37) in tRNA + diphosphate. Its function is as follows. Catalyzes the transfer of a dimethylallyl group onto the adenine at position 37 in tRNAs that read codons beginning with uridine, leading to the formation of N6-(dimethylallyl)adenosine (i(6)A). The polypeptide is tRNA dimethylallyltransferase (Erythrobacter litoralis (strain HTCC2594)).